We begin with the raw amino-acid sequence, 226 residues long: Ribose-5-phosphate isomerase A (226 aa).

Substrate-binding positions include Thr29–Thr32, Asp84–Asp87, and Lys97–Gly100. The active-site Proton acceptor is the Glu106. A substrate-binding site is contributed by Lys124.

It belongs to the ribose 5-phosphate isomerase family. Homodimer.

It carries out the reaction aldehydo-D-ribose 5-phosphate = D-ribulose 5-phosphate. Its pathway is carbohydrate degradation; pentose phosphate pathway; D-ribose 5-phosphate from D-ribulose 5-phosphate (non-oxidative stage): step 1/1. Functionally, catalyzes the reversible conversion of ribose-5-phosphate to ribulose 5-phosphate. This chain is Ribose-5-phosphate isomerase A, found in Methanothermobacter thermautotrophicus (strain ATCC 29096 / DSM 1053 / JCM 10044 / NBRC 100330 / Delta H) (Methanobacterium thermoautotrophicum).